The sequence spans 500 residues: Cytochrome P450 monooxygenase ausI (500 aa).

A helical membrane pass occupies residues 8–28 (LALLGQPLVPGLMVVSAILYL). Cys-440 provides a ligand contact to heme.

This sequence belongs to the cytochrome P450 family. Requires heme as cofactor.

It is found in the membrane. It participates in secondary metabolite biosynthesis; terpenoid biosynthesis. In terms of biological role, cytochrome P450 monooxygenase; part of the gene cluster B that mediates the biosynthesis of the fungal meroterpenoid acetoxydehydroaustin. The first step of the pathway is the synthesis of 3,5-dimethylorsellinic acid by the polyketide synthase ausA. 3,5-dimethylorsellinic acid is then prenylated by the polyprenyl transferase ausN. Further epoxidation by the FAD-dependent monooxygenase ausM and cyclization by the probable terpene cyclase ausL lead to the formation of protoaustinoid A. Protoaustinoid A is then oxidized to spiro-lactone preaustinoid A3 by the combined action of the FAD-binding monooxygenases ausB and ausC, and the dioxygenase ausE. Acid-catalyzed keto-rearrangement and ring contraction of the tetraketide portion of preaustinoid A3 by ausJ lead to the formation of preaustinoid A4. The aldo-keto reductase ausK, with the help of ausH, is involved in the next step by transforming preaustinoid A4 into isoaustinone which is in turn hydroxylated by the P450 monooxygenase ausI to form austinolide. The cytochrome P450 monooxygenase ausG then modifies austinolide to austinol. Austinol is further acetylated to austin by the O-acetyltransferase ausP, which spontaneously changes to dehydroaustin. The cytochrome P450 monooxygenase then converts dehydroaustin is into 7-dehydrodehydroaustin. The hydroxylation catalyzed by ausR permits the second O-acetyltransferase ausQ to add an additional acetyl group to the molecule, leading to the formation of acetoxydehydroaustin. Due to genetic rearrangements of the clusters and the subsequent loss of some enzymes, the end product of the Penicillium brasilianum austinoid biosynthesis clusters is acetoxydehydroaustin. The protein is Cytochrome P450 monooxygenase ausI of Penicillium brasilianum.